The following is a 377-amino-acid chain: Bifunctional enzyme IspD/IspF (377 aa).

The 2-C-methyl-D-erythritol 4-phosphate cytidylyltransferase stretch occupies residues 1–221 (MTTAAIIVAA…ERILRQDMDV (221 aa)). A 2-C-methyl-D-erythritol 2,4-cyclodiphosphate synthase region spans residues 222-377 (RLGNGYDVHR…ALATACLVKP (156 aa)). Residues D228 and H230 each contribute to the a divalent metal cation site. Residues 228-230 (DVH) and 254-255 (HS) contribute to the 4-CDP-2-C-methyl-D-erythritol 2-phosphate site. H262 contacts a divalent metal cation. 4-CDP-2-C-methyl-D-erythritol 2-phosphate-binding positions include 276–278 (DIG), 352–355 (TTSE), F359, and R362.

It in the N-terminal section; belongs to the IspD/TarI cytidylyltransferase family. IspD subfamily. The protein in the C-terminal section; belongs to the IspF family. Requires a divalent metal cation as cofactor.

The enzyme catalyses 2-C-methyl-D-erythritol 4-phosphate + CTP + H(+) = 4-CDP-2-C-methyl-D-erythritol + diphosphate. The catalysed reaction is 4-CDP-2-C-methyl-D-erythritol 2-phosphate = 2-C-methyl-D-erythritol 2,4-cyclic diphosphate + CMP. The protein operates within isoprenoid biosynthesis; isopentenyl diphosphate biosynthesis via DXP pathway; isopentenyl diphosphate from 1-deoxy-D-xylulose 5-phosphate: step 2/6. It functions in the pathway isoprenoid biosynthesis; isopentenyl diphosphate biosynthesis via DXP pathway; isopentenyl diphosphate from 1-deoxy-D-xylulose 5-phosphate: step 4/6. Functionally, bifunctional enzyme that catalyzes the formation of 4-diphosphocytidyl-2-C-methyl-D-erythritol from CTP and 2-C-methyl-D-erythritol 4-phosphate (MEP) (IspD), and catalyzes the conversion of 4-diphosphocytidyl-2-C-methyl-D-erythritol 2-phosphate (CDP-ME2P) to 2-C-methyl-D-erythritol 2,4-cyclodiphosphate (ME-CPP) with a corresponding release of cytidine 5-monophosphate (CMP) (IspF). This Ruegeria pomeroyi (strain ATCC 700808 / DSM 15171 / DSS-3) (Silicibacter pomeroyi) protein is Bifunctional enzyme IspD/IspF.